The primary structure comprises 706 residues: Translation initiation factor IF-2 (706 aa).

The segment at 55 to 117 is disordered; it reads KEVNSDSNQE…PTMKDEKGLI (63 aa). The segment covering 67–81 has biased composition (basic and acidic residues); the sequence is VNTDDKLDKIDKPNK. Basic residues predominate over residues 93-108; the sequence is KNKKSKKKQKNKKKGP. The 168-residue stretch at 208–375 folds into the tr-type G domain; it reads SRPPVVTVMG…MILLVSEVEE (168 aa). The segment at 217-224 is G1; sequence GHVDHGKT. Position 217-224 (217-224) interacts with GTP; that stretch reads GHVDHGKT. The tract at residues 242-246 is G2; it reads GITQH. The G3 stretch occupies residues 263-266; the sequence is DTPG. GTP contacts are provided by residues 263-267 and 317-320; these read DTPGH and NKID. The segment at 317 to 320 is G4; that stretch reads NKID. The G5 stretch occupies residues 353 to 355; sequence SAI.

This sequence belongs to the TRAFAC class translation factor GTPase superfamily. Classic translation factor GTPase family. IF-2 subfamily.

The protein localises to the cytoplasm. Functionally, one of the essential components for the initiation of protein synthesis. Protects formylmethionyl-tRNA from spontaneous hydrolysis and promotes its binding to the 30S ribosomal subunits. Also involved in the hydrolysis of GTP during the formation of the 70S ribosomal complex. This Alkaliphilus metalliredigens (strain QYMF) protein is Translation initiation factor IF-2.